Reading from the N-terminus, the 306-residue chain is Ornithine carbamoyltransferase (306 aa).

Residues 53–56, Gln-80, Arg-104, and 131–134 contribute to the carbamoyl phosphate site; these read STRT and HPCQ. L-ornithine contacts are provided by residues Asn-162, Asp-219, and 223–224; that span reads SM. Carbamoyl phosphate-binding positions include 259-260 and Arg-287; that span reads CL.

Belongs to the aspartate/ornithine carbamoyltransferase superfamily. OTCase family.

The protein resides in the cytoplasm. The enzyme catalyses carbamoyl phosphate + L-ornithine = L-citrulline + phosphate + H(+). It participates in amino-acid degradation; L-arginine degradation via ADI pathway; carbamoyl phosphate from L-arginine: step 2/2. Functionally, reversibly catalyzes the transfer of the carbamoyl group from carbamoyl phosphate (CP) to the N(epsilon) atom of ornithine (ORN) to produce L-citrulline. This chain is Ornithine carbamoyltransferase, found in Acinetobacter baumannii (strain AYE).